The chain runs to 452 residues: Exodeoxyribonuclease 7 large subunit (452 aa).

This sequence belongs to the XseA family. As to quaternary structure, heterooligomer composed of large and small subunits.

It localises to the cytoplasm. The enzyme catalyses Exonucleolytic cleavage in either 5'- to 3'- or 3'- to 5'-direction to yield nucleoside 5'-phosphates.. Its function is as follows. Bidirectionally degrades single-stranded DNA into large acid-insoluble oligonucleotides, which are then degraded further into small acid-soluble oligonucleotides. The polypeptide is Exodeoxyribonuclease 7 large subunit (Bacillus cereus (strain 03BB102)).